A 142-amino-acid polypeptide reads, in one-letter code: Large ribosomal subunit protein bL17 (142 aa).

Belongs to the bacterial ribosomal protein bL17 family. In terms of assembly, part of the 50S ribosomal subunit. Contacts protein L32.

The polypeptide is Large ribosomal subunit protein bL17 (Chlamydia muridarum (strain MoPn / Nigg)).